Consider the following 310-residue polypeptide: UPF0761 membrane protein VSAL_I2938 (310 aa).

Helical transmembrane passes span 34 to 54, 97 to 117, 136 to 156, 178 to 198, 207 to 227, and 242 to 262; these read YMAY…LSVL, MTAV…SAID, FSLY…SLAA, LLGW…YLLV, HALV…VGFA, and ALAA…IVLI.

Belongs to the UPF0761 family.

The protein localises to the cell inner membrane. This Aliivibrio salmonicida (strain LFI1238) (Vibrio salmonicida (strain LFI1238)) protein is UPF0761 membrane protein VSAL_I2938.